A 309-amino-acid polypeptide reads, in one-letter code: Protoheme IX farnesyltransferase (309 aa).

The next 9 helical transmembrane spans lie at 30-49 (VMSL…PGGV), 53-75 (IGFT…NMWY), 98-118 (AGEA…MLGL), 123-143 (VAAG…SMWL), 151-171 (IVIG…AVTG), 178-198 (VLMF…LALF), 224-244 (ILIY…TEVA), 247-267 (VYLI…YDIW), and 285-305 (VFKF…LDAI).

Belongs to the UbiA prenyltransferase family. Protoheme IX farnesyltransferase subfamily. In terms of assembly, interacts with CtaA.

The protein resides in the cell inner membrane. The catalysed reaction is heme b + (2E,6E)-farnesyl diphosphate + H2O = Fe(II)-heme o + diphosphate. The protein operates within porphyrin-containing compound metabolism; heme O biosynthesis; heme O from protoheme: step 1/1. In terms of biological role, converts heme B (protoheme IX) to heme O by substitution of the vinyl group on carbon 2 of heme B porphyrin ring with a hydroxyethyl farnesyl side group. The chain is Protoheme IX farnesyltransferase from Jannaschia sp. (strain CCS1).